We begin with the raw amino-acid sequence, 197 residues long: tRNA(Phe) 7-((3-amino-3-carboxypropyl)-4-demethylwyosine(37)-N(4))-methyltransferase (197 aa).

Belongs to the TYW3 family.

The enzyme catalyses 4-demethyl-7-[(3S)-3-amino-3-carboxypropyl]wyosine(37) in tRNA(Phe) + S-adenosyl-L-methionine = 7-[(3S)-3-amino-3-carboxypropyl]wyosine(37) in tRNA(Phe) + S-adenosyl-L-homocysteine + H(+). Its function is as follows. S-adenosyl-L-methionine-dependent methyltransferase that acts as a component of the wyosine derivatives biosynthesis pathway. Probably methylates N-4 position of wybutosine-86 to produce wybutosine-72. This is tRNA(Phe) 7-((3-amino-3-carboxypropyl)-4-demethylwyosine(37)-N(4))-methyltransferase from Thermococcus sibiricus (strain DSM 12597 / MM 739).